We begin with the raw amino-acid sequence, 75 residues long: MEQTFYQFLMTYRGKLEKDDNSELAEWAFRNHNFPKHSNTYDEISNYLEWNSPFPSATVTFDSLWNEYEWKKAAY.

Belongs to the UPF0346 family.

The polypeptide is UPF0346 protein OB1736 (Oceanobacillus iheyensis (strain DSM 14371 / CIP 107618 / JCM 11309 / KCTC 3954 / HTE831)).